A 162-amino-acid polypeptide reads, in one-letter code: Phosphopantetheine adenylyltransferase (162 aa).

Ser-11 contacts substrate. ATP is bound by residues 11–12 (SF) and His-19. Substrate-binding residues include Lys-43, Leu-75, and Arg-89. Residues 90–92 (GLR), Glu-100, and 125–131 (YSYLSSS) each bind ATP.

This sequence belongs to the bacterial CoaD family. In terms of assembly, homohexamer. Requires Mg(2+) as cofactor.

The protein localises to the cytoplasm. The enzyme catalyses (R)-4'-phosphopantetheine + ATP + H(+) = 3'-dephospho-CoA + diphosphate. It participates in cofactor biosynthesis; coenzyme A biosynthesis; CoA from (R)-pantothenate: step 4/5. Reversibly transfers an adenylyl group from ATP to 4'-phosphopantetheine, yielding dephospho-CoA (dPCoA) and pyrophosphate. This Geotalea uraniireducens (strain Rf4) (Geobacter uraniireducens) protein is Phosphopantetheine adenylyltransferase.